The chain runs to 577 residues: DNA primase (577 aa).

The segment at 40–64 (CPFHHDKTPSFTVSNEKQFYYCFGC) adopts a CHC2-type zinc-finger fold. The region spanning 255–337 (VYLLVVEGYI…KKTLKFILLP (83 aa)) is the Toprim domain. Residues E261, D305, and D307 each contribute to the Mg(2+) site.

The protein belongs to the DnaG primase family. As to quaternary structure, monomer. Interacts with DnaB. The cofactor is Zn(2+). Mg(2+) is required as a cofactor.

The enzyme catalyses ssDNA + n NTP = ssDNA/pppN(pN)n-1 hybrid + (n-1) diphosphate.. RNA polymerase that catalyzes the synthesis of short RNA molecules used as primers for DNA polymerase during DNA replication. The protein is DNA primase of Buchnera aphidicola subsp. Acyrthosiphon pisum (strain APS) (Acyrthosiphon pisum symbiotic bacterium).